Consider the following 225-residue polypeptide: Cytidylate kinase (225 aa).

12-20 (GPSGAGKGT) lines the ATP pocket.

Belongs to the cytidylate kinase family. Type 1 subfamily.

The protein resides in the cytoplasm. It carries out the reaction CMP + ATP = CDP + ADP. It catalyses the reaction dCMP + ATP = dCDP + ADP. This is Cytidylate kinase from Stenotrophomonas maltophilia (strain K279a).